Here is a 327-residue protein sequence, read N- to C-terminus: Interleukin-12 subunit beta (327 aa).

Positions 1–22 are cleaved as a signal peptide; the sequence is MHPQQLVVSWFSLVLLASPIVA. The region spanning 23 to 106 is the Ig-like C2-type domain; it reads MWELEKNVYV…LSRSLLLLHK (84 aa). A disulfide bridge links Cys50 with Cys90. A glycan (N-linked (GlcNAc...) asparagine) is linked at Asn223. One can recognise a Fibronectin type-III domain in the interval 238–327; that stretch reads PPKNLQLRPL…WSEWASVSCS (90 aa).

It belongs to the IL-12B family. In terms of assembly, heterodimer with IL12A; disulfide-linked. The heterodimer is known as interleukin IL-12. Heterodimer with IL23A; disulfide-linked. The heterodimer is known as interleukin IL-23. Also secreted as a monomer. Interacts with NBR1; this interaction promotes IL-12 secretion.

The protein resides in the secreted. Its function is as follows. Cytokine that can act as a growth factor for activated T and NK cells, enhance the lytic activity of NK/lymphokine-activated killer cells, and stimulate the production of IFN-gamma by resting PBMC. Associates with IL23A to form the IL-23 interleukin, a heterodimeric cytokine which functions in innate and adaptive immunity. IL-23 may constitute with IL-17 an acute response to infection in peripheral tissues. IL-23 binds to a heterodimeric receptor complex composed of IL12RB1 and IL23R, activates the Jak-Stat signaling cascade, stimulates memory rather than naive T-cells and promotes production of pro-inflammatory cytokines. IL-23 induces autoimmune inflammation and thus may be responsible for autoimmune inflammatory diseases and may be important for tumorigenesis. This chain is Interleukin-12 subunit beta (IL12B), found in Bos taurus (Bovine).